The following is a 486-amino-acid chain: Transcriptional regulator ERG (486 aa).

The span at 41 to 54 shows a compositional bias: polar residues; that stretch reads TASSSSDYGQTSKM. 2 disordered regions span residues 41 to 62 and 79 to 99; these read TASS…PQQD and PSQV…KGGK. Serine 55, serine 88, and serine 103 each carry phosphoserine. The PNT domain maps to 120–206; the sequence is VPPPNMTTNE…SHLHYLRETP (87 aa). Residues 249-311 are disordered; that stretch reads QRITTRPDLP…ILGPTSSRLA (63 aa). A compositionally biased stretch (polar residues) spans 271–284; the sequence is SHLTPQSKAAQPSP. Lysine 289 participates in a covalent cross-link: Glycyl lysine isopeptide (Lys-Gly) (interchain with G-Cter in SUMO2). Positions 318-398 form a DNA-binding region, ETS; sequence IQLWQFLLEL…HGKRYAYKFD (81 aa).

It belongs to the ETS family. As to quaternary structure, identified in a IGF2BP1-dependent mRNP granule complex containing untranslated mRNAs. Interacts with SETDB1.

Its subcellular location is the nucleus. The protein localises to the cytoplasm. In terms of biological role, transcriptional regulator. May participate in transcriptional regulation through the recruitment of SETDB1 histone methyltransferase and subsequent modification of local chromatin structure. The protein is Transcriptional regulator ERG (Erg) of Mus musculus (Mouse).